The primary structure comprises 501 residues: 2-isopropylmalate synthase (501 aa).

Positions 7–269 (VRIFDTTLRD…QTQIKTEEIA (263 aa)) constitute a Pyruvate carboxyltransferase domain. Asp16, His204, His206, and Asn240 together coordinate Mn(2+). The interval 394-501 (QLEGFTVSTG…RAYISALNRL (108 aa)) is regulatory domain.

Belongs to the alpha-IPM synthase/homocitrate synthase family. LeuA type 1 subfamily. In terms of assembly, homodimer. Requires Mn(2+) as cofactor.

Its subcellular location is the cytoplasm. The catalysed reaction is 3-methyl-2-oxobutanoate + acetyl-CoA + H2O = (2S)-2-isopropylmalate + CoA + H(+). Its pathway is amino-acid biosynthesis; L-leucine biosynthesis; L-leucine from 3-methyl-2-oxobutanoate: step 1/4. Catalyzes the condensation of the acetyl group of acetyl-CoA with 3-methyl-2-oxobutanoate (2-ketoisovalerate) to form 3-carboxy-3-hydroxy-4-methylpentanoate (2-isopropylmalate). This Leptospira interrogans serogroup Icterohaemorrhagiae serovar copenhageni (strain Fiocruz L1-130) protein is 2-isopropylmalate synthase.